A 157-amino-acid chain; its full sequence is 2-C-methyl-D-erythritol 2,4-cyclodiphosphate synthase (157 aa).

A divalent metal cation contacts are provided by Asp-8 and His-10. Residues 8-10 (DVH) and 34-35 (HS) contribute to the 4-CDP-2-C-methyl-D-erythritol 2-phosphate site. Residue His-42 coordinates a divalent metal cation. Residues 56 to 58 (DIG), 61 to 65 (FPDTD), 100 to 106 (AQAPKMA), 132 to 135 (TTTE), Phe-139, and Arg-142 each bind 4-CDP-2-C-methyl-D-erythritol 2-phosphate.

The protein belongs to the IspF family. Homotrimer. The cofactor is a divalent metal cation.

It carries out the reaction 4-CDP-2-C-methyl-D-erythritol 2-phosphate = 2-C-methyl-D-erythritol 2,4-cyclic diphosphate + CMP. The protein operates within isoprenoid biosynthesis; isopentenyl diphosphate biosynthesis via DXP pathway; isopentenyl diphosphate from 1-deoxy-D-xylulose 5-phosphate: step 4/6. In terms of biological role, involved in the biosynthesis of isopentenyl diphosphate (IPP) and dimethylallyl diphosphate (DMAPP), two major building blocks of isoprenoid compounds. Catalyzes the conversion of 4-diphosphocytidyl-2-C-methyl-D-erythritol 2-phosphate (CDP-ME2P) to 2-C-methyl-D-erythritol 2,4-cyclodiphosphate (ME-CPP) with a corresponding release of cytidine 5-monophosphate (CMP). The protein is 2-C-methyl-D-erythritol 2,4-cyclodiphosphate synthase of Pseudomonas syringae pv. syringae (strain B728a).